The chain runs to 118 residues: Protein Rev (118 aa).

Residues S5 and S8 each carry the phosphoserine; by host CK2 modification. The homomultimerization stretch occupies residues L18–N26. The interval Y23 to R46 is disordered. The Nuclear localization signal and RNA-binding (RRE) motif lies at T34 to R50. Over residues Q36–R46 the composition is skewed to basic residues. A Nuclear export signal and binding to XPO1 motif is present at residues L73–N84. The tract at residues E87–C118 is disordered. Residue S92 is modified to Phosphoserine; by host. Residues S103–S112 show a composition bias toward polar residues.

Belongs to the HIV-1 REV protein family. Homomultimer; when bound to the RRE. Multimeric assembly is essential for activity and may involve XPO1. Binds to human KPNB1, XPO1, TNPO1, RANBP5 and IPO7. Interacts with the viral Integrase. Interacts with human KHDRBS1. Interacts with human NAP1; this interaction decreases Rev multimerization and stimulates its activity. Interacts with human DEAD-box helicases DDX3 and DDX24; these interactions may serve for viral RNA export to the cytoplasm and packaging, respectively. Interacts with human PSIP1; this interaction may inhibit HIV-1 DNA integration by promoting dissociation of the Integrase-LEDGF/p75 complex. Asymmetrically arginine dimethylated at one site by host PRMT6. Methylation impairs the RNA-binding activity and export of viral RNA from the nucleus to the cytoplasm. In terms of processing, phosphorylated by protein kinase CK2. Presence of, and maybe binding to the N-terminus of the regulatory beta subunit of CK2 is necessary for CK2-mediated Rev's phosphorylation.

Its subcellular location is the host nucleus. The protein resides in the host nucleolus. It is found in the host cytoplasm. In terms of biological role, escorts unspliced or incompletely spliced viral pre-mRNAs (late transcripts) out of the nucleus of infected cells. These pre-mRNAs carry a recognition sequence called Rev responsive element (RRE) located in the env gene, that is not present in fully spliced viral mRNAs (early transcripts). This function is essential since most viral proteins are translated from unspliced or partially spliced pre-mRNAs which cannot exit the nucleus by the pathway used by fully processed cellular mRNAs. Rev itself is translated from a fully spliced mRNA that readily exits the nucleus. Rev's nuclear localization signal (NLS) binds directly to KPNB1/Importin beta-1 without previous binding to KPNA1/Importin alpha-1. KPNB1 binds to the GDP bound form of RAN (Ran-GDP) and targets Rev to the nucleus. In the nucleus, the conversion from Ran-GDP to Ran-GTP dissociates Rev from KPNB1 and allows Rev's binding to the RRE in viral pre-mRNAs. Rev multimerization on the RRE via cooperative assembly exposes its nuclear export signal (NES) to the surface. Rev can then form a complex with XPO1/CRM1 and Ran-GTP, leading to nuclear export of the complex. Conversion from Ran-GTP to Ran-GDP mediates dissociation of the Rev/RRE/XPO1/RAN complex, so that Rev can return to the nucleus for a subsequent round of export. Beside KPNB1, also seems to interact with TNPO1/Transportin-1, RANBP5/IPO5 and IPO7/RANBP7 for nuclear import. The nucleoporin-like HRB/RIP is an essential cofactor that probably indirectly interacts with Rev to release HIV RNAs from the perinuclear region to the cytoplasm. The chain is Protein Rev from Human immunodeficiency virus type 1 group M subtype D (isolate ELI) (HIV-1).